A 139-amino-acid chain; its full sequence is Actin-depolymerizing factor 6 (139 aa).

Residues 5–139 (ASGMAVGDEC…SMDIVKARAL (135 aa)) form the ADF-H domain.

It belongs to the actin-binding proteins ADF family.

Functionally, actin-depolymerizing protein. Severs actin filaments (F-actin) and binds to actin monomers. The sequence is that of Actin-depolymerizing factor 6 (ADF6) from Oryza sativa subsp. japonica (Rice).